Reading from the N-terminus, the 483-residue chain is MLTLDTLNTMLAVSEEGMVEEMILALLASPQLVIFFEKFPRLKNAVTADLPRWREALRSRLKDARVPPELTEEVMCYQQSQLLSTPQFIVQLPQILALLHRLHSPYAAQAKQLTESNSTFTPALHTLFLQRWRLSLVVQATTLNQQLLEEEREQLLSDVQERMTLSGQLEPTLAENDNAAGRLWDMSAGQLKRGDYQLIVKYGEFLAAQPELMQLAEQLGRSREAKSVPKKDAPMETFRTLVREPATVPEQVDGIQQGDDILRLLPPELATLGITELEYEFYRRLVEKQLLTYRLHGEAWREKVTERPVVHQDVDEQPRGPFIVCVDTSGSMGGFNEQCAKAFCLALMRVALADNRRCFIMLFSTDVVRYELSGPESIEQAIRFLSQRFRGGTDIASCFRAIIERMQGREWFDADAVVISDFIAQRLPDDVVSKVGELQRLHQHRFHAVAMSAHGKPGIMRIFDHIWRFDTGMRSRLLRRWRR.

The protein belongs to the ViaA family. Homodimer. Interacts with RavA.

Its subcellular location is the cytoplasm. Functionally, component of the RavA-ViaA chaperone complex, which may act on the membrane to optimize the function of some of the respiratory chains. ViaA stimulates the ATPase activity of RavA. This Salmonella typhi protein is Regulatory protein ViaA.